The following is a 1094-amino-acid chain: Centrosomal protein of 128 kDa (1094 aa).

The segment at 1-29 (MAESSSESDHFRCRDRLSPWAARSTHRGT) is disordered. Basic and acidic residues predominate over residues 7–17 (ESDHFRCRDRL). Phosphoserine is present on Ser31. Residues 115–140 (DGGTGSELHHFPPTSPLKDYGDPQGI) form a disordered region. 2 coiled-coil regions span residues 190 to 827 (SRSD…QESI) and 879 to 959 (EELK…IALE). Ser249, Ser291, and Ser331 each carry phosphoserine. The disordered stretch occupies residues 319 to 345 (AEGDRKGLQHQVSQISKQQSNYQDEQG). Residues 328–342 (HQVSQISKQQSNYQD) show a composition bias toward polar residues. Residues 987-999 (DSCSSSERTDGRY) are compositionally biased toward basic and acidic residues. Positions 987-1018 (DSCSSSERTDGRYSKYRVRRNSLQHHQDDTKY) are disordered. Positions 1000 to 1009 (SKYRVRRNSL) are enriched in basic residues. Ser1061 is subject to Phosphoserine. The tract at residues 1067–1094 (VAPDSASNKEDATMNGTSSQPKKEEYGS) is disordered.

Its subcellular location is the cytoplasm. It is found in the cytoskeleton. It localises to the microtubule organizing center. The protein resides in the centrosome. The protein localises to the centriole. Its subcellular location is the spindle pole. In Homo sapiens (Human), this protein is Centrosomal protein of 128 kDa (CEP128).